Reading from the N-terminus, the 210-residue chain is Thymidylate kinase (210 aa).

11–18 (GGEGAGKT) is an ATP binding site.

The protein belongs to the thymidylate kinase family.

It carries out the reaction dTMP + ATP = dTDP + ADP. Its function is as follows. Phosphorylation of dTMP to form dTDP in both de novo and salvage pathways of dTTP synthesis. This Halalkalibacterium halodurans (strain ATCC BAA-125 / DSM 18197 / FERM 7344 / JCM 9153 / C-125) (Bacillus halodurans) protein is Thymidylate kinase (tmk).